The primary structure comprises 492 residues: MGLFGMMKFAQTHHLVKRRGLRAPEGYFTPIAVDLWNVMYTLVVKYQRRYPSYDREAITLHCLCSMLRVFTQKSLFPIFVTDRGVECTEPVVFGAKAILARTTAQCRTDEEASDVDASPPPSPITDSRPSFAFSNMRRRGHAFAPGDRGTRAAGPGPAAPWGAPSKPALRLAHLFCIRVLRALGYAYINSGQLEADDACANLYHTNTVAYVHTTDTDLLLMGCDIVLDISTGYIPTIHCRDLLQYFKMSYPQFLALFVRCHTDLHPNNTYASVEDVLRECHWTAPSRSQARRAARRERANSRSLESMPTLTAAPVGLETRISWTEILAQQIAGEDDYEEDPPLQPPDVAGGPRDGARSSSSEILTPPELVQVPNAQRVAEHRGYVAGRRRHVIHDAPEALDWLPDPMTIAELVEHRYVKYVISLISPKERGPWTLLKRLPIYQDLRDEDLARSIVTRHITAPDIADRFLAQLWAHAPPPAFYKDVLAKFWDE.

Disordered regions lie at residues 110-130 (EEAS…SRPS), 288-307 (SQAR…LESM), and 334-371 (EDDY…ELVQ).

Belongs to the herpesviridae VHS protein family. As to quaternary structure, interacts with human EIF4H, EIF4A1 and EIF4A2; interaction with eIF4AI and EIF4A2 presumably allows Vhs protein to associate with the eIF4F cap-binding complex.

Its subcellular location is the virion. Minor structural protein that acts as an endoribonuclease during lytic infection. Degrades host mRNAs in the cytoplasm by cutting them at preferred sites, including some in regions of translation initiation. Together with inhibition of host splicing by ICP27, contributes to an overall decrease in host protein synthesis. Also, after the onset of viral transcription, accelerates the turnover of viral mRNA, thereby facilitating the sequential expression of different classes of viral genes. Binds translation initiation factors eIF4H, eIF4AI, and eIF4AII, thereby may interact directly with the translation initiation complex and thus digest specifically mRNAs. Also impedes antigen presentation by major histocompatibility complex class I and class II molecules, inhibits secretion of cytokines that would otherwise recruit lymphocytes and neutrophils cells to the site of infection and blocks the activation of dendritic cells. Impedes the alpha/beta interferon-mediated response to infection. Inhibits the integrated stress response (ISR) in the infected cell, this function requires the endonuclease activity. Stress granule formation is thus inhibited, which allows protein synthesis and viral replication. The protein is Virion host shutoff protein (UL41) of Homo sapiens (Human).